The primary structure comprises 439 residues: GTPase Der (439 aa).

EngA-type G domains are found at residues Ala-2–Gly-168 and Ile-181–Thr-357. GTP-binding positions include Gly-8–Ser-15, Asp-55–Val-59, Asn-118–Glu-121, Gly-187–Ser-194, Asp-234–Leu-238, and Asn-300–Asp-303. In terms of domain architecture, KH-like spans Thr-358–Arg-439.

Belongs to the TRAFAC class TrmE-Era-EngA-EngB-Septin-like GTPase superfamily. EngA (Der) GTPase family. Associates with the 50S ribosomal subunit.

Functionally, GTPase that plays an essential role in the late steps of ribosome biogenesis. This is GTPase Der from Thermotoga neapolitana (strain ATCC 49049 / DSM 4359 / NBRC 107923 / NS-E).